The primary structure comprises 462 residues: Probable protein phosphatase 2C 1 (462 aa).

The PPM-type phosphatase domain occupies 60 to 362 (SSCIFTQQGR…DDCAVVCLFL (303 aa)). Positions 95, 96, 307, and 353 each coordinate Mn(2+). Disordered regions lie at residues 369–394 (ETSDNEEQCFSSATNAVESDESQGAE) and 421–443 (EADNAEKEKTREGEQNWSGLEGV). A compositionally biased stretch (polar residues) spans 376 to 385 (QCFSSATNAV). Basic and acidic residues predominate over residues 424–434 (NAEKEKTREGE).

The protein belongs to the PP2C family. Interacts with GCN5. Mg(2+) is required as a cofactor. It depends on Mn(2+) as a cofactor.

It catalyses the reaction O-phospho-L-seryl-[protein] + H2O = L-seryl-[protein] + phosphate. The enzyme catalyses O-phospho-L-threonyl-[protein] + H2O = L-threonyl-[protein] + phosphate. In terms of biological role, may act as negative regulator of GCN5. The polypeptide is Probable protein phosphatase 2C 1 (PPC6-6) (Arabidopsis thaliana (Mouse-ear cress)).